We begin with the raw amino-acid sequence, 191 residues long: A-type ATP synthase subunit E 1 (191 aa).

It belongs to the V-ATPase E subunit family. As to quaternary structure, has multiple subunits with at least A(3), B(3), C, D, E, F, H, I and proteolipid K(x).

The protein localises to the cell membrane. Functionally, component of the A-type ATP synthase that produces ATP from ADP in the presence of a proton gradient across the membrane. The protein is A-type ATP synthase subunit E 1 of Methanospirillum hungatei JF-1 (strain ATCC 27890 / DSM 864 / NBRC 100397 / JF-1).